The primary structure comprises 913 residues: Auxilin (913 aa).

Methionine 1 is modified (N-acetylmethionine). 3 tandem repeats follow at residues 36 to 39, 40 to 43, and 44 to 47. Residues 36-47 form a 3 X 4 AA approximate tandem repeats region; sequence NLKDNLKDTLKD. Residues 55–222 enclose the Phosphatase tensin-type domain; the sequence is SVTSYTKGDL…GYMCDLLADK (168 aa). Phosphoserine is present on serine 112. The active-site Phosphocysteine intermediate is cysteine 164. The C2 tensin-type domain maps to 228–366; sequence FKPLTIKSIT…FQVTLDVELQ (139 aa). Residues 409 to 417 carry the SH3-binding motif; that stretch reads PIDIPPDNP. Residues 451-776 are disordered; it reads QESEQSDDEL…GKGSSNLEGK (326 aa). Serine 453 and serine 456 each carry phosphoserine. A compositionally biased stretch (polar residues) spans 506–523; it reads AMSNSFSPPAAPPTNSEL. A compositionally biased stretch (low complexity) spans 554-572; that stretch reads ASTQSTPRRSATSTSASPT. 2 positions are modified to phosphoserine: serine 563 and serine 570. Over residues 599-629 the composition is skewed to polar residues; the sequence is FLNTSSASSDPFLQPTRSPSPTVHASSTPAV. Low complexity predominate over residues 654–669; sequence SAATSPTGSSHGTPTH. The region spanning 849 to 913 is the J domain; the sequence is TKWKPVGMAD…FENQGQKPLY (65 aa).

Forms a complex composed of HSPA8, CLTC and DNAJC6. Interacts with HSPA8/HSC70 in an ATP-dependent manner; this interaction stimulates the HSPA8's ATPase activity. Interacts with CLTC; this interaction produces a local change in heavy-chain contacts, creating a detectable global distortion of the clathrin coat. Interacts with AP2A2. Interacts with DNM1(GTP-bound form); this interaction allows clathrin-coated vesicle (CCV) formation at the plasma membrane. In terms of processing, phosphorylation at Ser-570 modulates its ability to bind CLTC and therefore the synaptic vesicle endocytosis (SVE). Post-translationally, the N-terminus is blocked. In terms of tissue distribution, expressed in various brain regions, including cerebellum, corpus callosum, cortex, striatum, brainstem, pons, putamen, spinal cord and substantia nigra. Very low expression in non-neural tissues such as leukocytes, liver, adipose tissue, skeletal muscle and bone marrow.

It localises to the cytoplasmic vesicle. It is found in the clathrin-coated vesicle. Its function is as follows. May act as a protein phosphatase and/or a lipid phosphatase. Co-chaperone that recruits HSPA8/HSC70 to clathrin-coated vesicles (CCVs) and promotes the ATP-dependent dissociation of clathrin from CCVs and participates in clathrin-mediated endocytosis of synaptic vesicles and their recycling and also in intracellular trafficking. Firstly, binds tightly to the clathrin cages, at a ratio of one DNAJC6 per clathrin triskelion. The HSPA8:ATP complex then binds to the clathrin-auxilin cage, initially at a ratio of one HSPA8 per triskelion leading to ATP hydrolysis stimulation and causing a conformational change in the HSPA8. This cycle is repeated three times to drive to a complex containing the clathrin-auxilin cage associated to three HSPA8:ADP complex. The ATP hydrolysis of the third HSPA8:ATP complex leads to a concerted dismantling of the cage into component triskelia. Then, dissociates from the released triskelia and be recycled to initiate another cycle of HSPA8's recruitment. Also acts during the early steps of clathrin-coated vesicle (CCV) formation through its interaction with the GTP bound form of DNM1. The sequence is that of Auxilin from Homo sapiens (Human).